The sequence spans 239 residues: 4-hydroxy-tetrahydrodipicolinate reductase (239 aa).

NAD(+)-binding positions include 8-13, 78-80, and 102-105; these read GSTGKM, GTT, and SANM. His134 acts as the Proton donor/acceptor in catalysis. His135 contributes to the (S)-2,3,4,5-tetrahydrodipicolinate binding site. Lys138 (proton donor) is an active-site residue. Residue 144–145 coordinates (S)-2,3,4,5-tetrahydrodipicolinate; that stretch reads GT.

It belongs to the DapB family.

Its subcellular location is the cytoplasm. The enzyme catalyses (S)-2,3,4,5-tetrahydrodipicolinate + NAD(+) + H2O = (2S,4S)-4-hydroxy-2,3,4,5-tetrahydrodipicolinate + NADH + H(+). The catalysed reaction is (S)-2,3,4,5-tetrahydrodipicolinate + NADP(+) + H2O = (2S,4S)-4-hydroxy-2,3,4,5-tetrahydrodipicolinate + NADPH + H(+). It participates in amino-acid biosynthesis; L-lysine biosynthesis via DAP pathway; (S)-tetrahydrodipicolinate from L-aspartate: step 4/4. Functionally, catalyzes the conversion of 4-hydroxy-tetrahydrodipicolinate (HTPA) to tetrahydrodipicolinate. This chain is 4-hydroxy-tetrahydrodipicolinate reductase, found in Rickettsia africae (strain ESF-5).